Reading from the N-terminus, the 346-residue chain is MGQDLPLLLSAALGKKVNRPPVWMMRQAGRYMKIYRDLRERYPSFRERSENPELSYEISMQPFHAFKPDGVILFSDILTPLPGMGINFEIIESKGPIIEDPIRNLNQIENLKELNPSESLSFVGQVLSSLKKDVNNEATVLGFVGAPWTLAAYVVEGKSSKNYSLIKSMAFKEPGLLHKLLDHFAKSIGEYLKYQIKSGAQVVQIFDSWAGQLSPEDYDIFAGPYQKKVVDIVKAEHPETPVILYISGSAGVIERMAKTGIDIISLDWTVDIEEACKRIPSGIGIQGNVDPGILFGNKESIKERIDNTFNKTKDRKYILNLGHGILPGTPEENAQTFFEHGKKLTY.

Substrate is bound by residues 26–30 (RQAGR), Asp-76, Tyr-153, Ser-208, and His-323.

This sequence belongs to the uroporphyrinogen decarboxylase family. As to quaternary structure, homodimer.

The protein resides in the cytoplasm. The catalysed reaction is uroporphyrinogen III + 4 H(+) = coproporphyrinogen III + 4 CO2. It functions in the pathway porphyrin-containing compound metabolism; protoporphyrin-IX biosynthesis; coproporphyrinogen-III from 5-aminolevulinate: step 4/4. Its function is as follows. Catalyzes the decarboxylation of four acetate groups of uroporphyrinogen-III to yield coproporphyrinogen-III. The protein is Uroporphyrinogen decarboxylase of Prochlorococcus marinus (strain MIT 9215).